A 187-amino-acid polypeptide reads, in one-letter code: GTP cyclohydrolase 1 (187 aa).

Residues Cys78, His81, and Cys149 each contribute to the Zn(2+) site.

Belongs to the GTP cyclohydrolase I family. Toroid-shaped homodecamer, composed of two pentamers of five dimers.

The catalysed reaction is GTP + H2O = 7,8-dihydroneopterin 3'-triphosphate + formate + H(+). The protein operates within cofactor biosynthesis; 7,8-dihydroneopterin triphosphate biosynthesis; 7,8-dihydroneopterin triphosphate from GTP: step 1/1. The chain is GTP cyclohydrolase 1 from Wolinella succinogenes (strain ATCC 29543 / DSM 1740 / CCUG 13145 / JCM 31913 / LMG 7466 / NCTC 11488 / FDC 602W) (Vibrio succinogenes).